Consider the following 311-residue polypeptide: UDP-N-acetylenolpyruvoylglucosamine reductase (311 aa).

Residues 28–197 (KIGGNARWLV…VSARFHLARG (170 aa)) enclose the FAD-binding PCMH-type domain. Arg177 is an active-site residue. Catalysis depends on Ser226, which acts as the Proton donor. Residue Glu296 is part of the active site.

This sequence belongs to the MurB family. Requires FAD as cofactor.

It localises to the cytoplasm. It carries out the reaction UDP-N-acetyl-alpha-D-muramate + NADP(+) = UDP-N-acetyl-3-O-(1-carboxyvinyl)-alpha-D-glucosamine + NADPH + H(+). It participates in cell wall biogenesis; peptidoglycan biosynthesis. In terms of biological role, cell wall formation. The polypeptide is UDP-N-acetylenolpyruvoylglucosamine reductase (Magnetococcus marinus (strain ATCC BAA-1437 / JCM 17883 / MC-1)).